The following is a 275-amino-acid chain: NH(3)-dependent NAD(+) synthetase (275 aa).

46–53 (GISGGQDS) contributes to the ATP binding site. A Mg(2+)-binding site is contributed by Asp-52. Deamido-NAD(+) is bound at residue Arg-140. Thr-160 contributes to the ATP binding site. Glu-165 contacts Mg(2+). Deamido-NAD(+) contacts are provided by Lys-173 and Asp-180. Residues Lys-189 and Thr-211 each contribute to the ATP site. 260 to 261 (HK) contributes to the deamido-NAD(+) binding site.

This sequence belongs to the NAD synthetase family. In terms of assembly, homodimer.

It catalyses the reaction deamido-NAD(+) + NH4(+) + ATP = AMP + diphosphate + NAD(+) + H(+). It functions in the pathway cofactor biosynthesis; NAD(+) biosynthesis; NAD(+) from deamido-NAD(+) (ammonia route): step 1/1. Catalyzes the ATP-dependent amidation of deamido-NAD to form NAD. Uses ammonia as a nitrogen source. This is NH(3)-dependent NAD(+) synthetase from Shigella dysenteriae serotype 1 (strain Sd197).